Here is a 617-residue protein sequence, read N- to C-terminus: Dihydroxy-acid dehydratase (617 aa).

Aspartate 82 contacts Mg(2+). [2Fe-2S] cluster is bound at residue cysteine 123. Residues aspartate 124 and lysine 125 each coordinate Mg(2+). Lysine 125 carries the post-translational modification N6-carboxylysine. A [2Fe-2S] cluster-binding site is contributed by cysteine 197. Glutamate 497 provides a ligand contact to Mg(2+). Serine 523 acts as the Proton acceptor in catalysis.

It belongs to the IlvD/Edd family. Homodimer. The cofactor is [2Fe-2S] cluster. Mg(2+) serves as cofactor.

The catalysed reaction is (2R)-2,3-dihydroxy-3-methylbutanoate = 3-methyl-2-oxobutanoate + H2O. It catalyses the reaction (2R,3R)-2,3-dihydroxy-3-methylpentanoate = (S)-3-methyl-2-oxopentanoate + H2O. The protein operates within amino-acid biosynthesis; L-isoleucine biosynthesis; L-isoleucine from 2-oxobutanoate: step 3/4. Its pathway is amino-acid biosynthesis; L-valine biosynthesis; L-valine from pyruvate: step 3/4. Functionally, functions in the biosynthesis of branched-chain amino acids. Catalyzes the dehydration of (2R,3R)-2,3-dihydroxy-3-methylpentanoate (2,3-dihydroxy-3-methylvalerate) into 2-oxo-3-methylpentanoate (2-oxo-3-methylvalerate) and of (2R)-2,3-dihydroxy-3-methylbutanoate (2,3-dihydroxyisovalerate) into 2-oxo-3-methylbutanoate (2-oxoisovalerate), the penultimate precursor to L-isoleucine and L-valine, respectively. The sequence is that of Dihydroxy-acid dehydratase from Streptomyces avermitilis (strain ATCC 31267 / DSM 46492 / JCM 5070 / NBRC 14893 / NCIMB 12804 / NRRL 8165 / MA-4680).